Here is a 971-residue protein sequence, read N- to C-terminus: MDRGLSTSTRIDDEGLRERNVASQSTSTLSPEALTATGDVELKDKTGKDCKTFGRTPDGTVFTVPQTHDMVSQLLSPSEPKNLSDVIVLAILGAHILLLWQLPTGAKVPVFAIIYLFWRAAYNAGIGWLLHNQSHHKTLVRWAEKTKVFVNPATGKNPHPNVYNFFKRELETKIPHDYSFDEAPIEYNTWLVFRRLVDLILMCDFVSYCLFAIACSHHPVNESVLMTVLRWSAGIVLVLFNLWVKLDAHRVVKDFAWYWGDFFYLIDQELTFDGVFEMAPHPMYSVGYAGYYGISLMAASYKVLFISIIAHAAQFAFLVLVENPHIDKTYNPPPSRKRSAEQETGSVSSRTADSPIAPTPIDEQIPHAPTFSSSPPQSVHELLGLHNLDLYRITDTSSVLIQFLVFALTVLTPSTPWYQFLFVANAAVWRLWFSIGVGYMLHRQSNHKAWTRHFVKYGETPQEAWNQWKGTYHLSMIMCYASFIAAVWKMYNFPADWGYGLVLLRHVLGAGLISLQIWTSVSIYESLGEFGWFYGDFFFDGSSKLTYNGIYRFLNNPERVLGLAGVWGAVLITSSGAITFLALLSHILSLAFIQFIERPHMQKLYGQSLRQDAGLVKSLKKSLPPTLRQLHGSVDKIFDESFEFIEEIIETARPKLANGVNTFVKDTTALFQSYPARVTISRIDEDLAGYDSRDYSLEVEGTDSSSLAEHDQSTGREGANARMPLDRRGDLKNLVFEYGAPIRVKWTAPLNHSKKDWIGLYKVTDNTSREVTRVSSQGRWIAVNEGAYDNLTCEKGIVKSDVVIKATQQQDGDKRDLATGEVIFSGDKLFWTQGVFEFRYHHNAKHNVMAISRPFEIRIGRYEEEDDHELTQASVEKSLLPVIRSCFDRDPEIAPEAVDEPFGSLVERDGKFAKRVVFAVHQMFGVEFAPGVVQADGTVRNLAWRVCNAKRVLAPYSMSRNGASTPTERKE.

Positions 1-30 (MDRGLSTSTRIDDEGLRERNVASQSTSTLS) are disordered. Residues 1–85 (MDRGLSTSTR…SPSEPKNLSD (85 aa)) are Lumenal-facing. Basic and acidic residues predominate over residues 10 to 20 (RIDDEGLRERN). The segment covering 21 to 30 (VASQSTSTLS) has biased composition (polar residues). A helical transmembrane segment spans residues 86-106 (VIVLAILGAHILLLWQLPTGA). The Cytoplasmic portion of the chain corresponds to 107-109 (KVP). A helical membrane pass occupies residues 110–130 (VFAIIYLFWRAAYNAGIGWLL). Residues 131–195 (HNQSHHKTLV…EYNTWLVFRR (65 aa)) are Lumenal-facing. Residues 196 to 216 (LVDLILMCDFVSYCLFAIACS) traverse the membrane as a helical segment. Over 217–223 (HHPVNES) the chain is Cytoplasmic. The helical transmembrane segment at 224–244 (VLMTVLRWSAGIVLVLFNLWV) threads the bilayer. Topologically, residues 245 to 277 (KLDAHRVVKDFAWYWGDFFYLIDQELTFDGVFE) are lumenal. The chain crosses the membrane as a helical span at residues 278 to 298 (MAPHPMYSVGYAGYYGISLMA). Residues 299–300 (AS) are Cytoplasmic-facing. The helical transmembrane segment at 301 to 321 (YKVLFISIIAHAAQFAFLVLV) threads the bilayer. At 322 to 389 (ENPHIDKTYN…HELLGLHNLD (68 aa)) the chain is on the lumenal side. The tract at residues 330 to 359 (YNPPPSRKRSAEQETGSVSSRTADSPIAPT) is disordered. Polar residues predominate over residues 342–352 (QETGSVSSRTA). A helical transmembrane segment spans residues 390–411 (LYRITDTSSVLIQFLVFALTVL). The Cytoplasmic segment spans residues 412-417 (TPSTPW). A helical transmembrane segment spans residues 418-441 (YQFLFVANAAVWRLWFSIGVGYML). The Lumenal portion of the chain corresponds to 442–473 (HRQSNHKAWTRHFVKYGETPQEAWNQWKGTYH). The helical transmembrane segment at 474–494 (LSMIMCYASFIAAVWKMYNFP) threads the bilayer. At 495–496 (AD) the chain is on the cytoplasmic side. The helical transmembrane segment at 497–517 (WGYGLVLLRHVLGAGLISLQI) threads the bilayer. At 518-575 (WTSVSIYESLGEFGWFYGDFFFDGSSKLTYNGIYRFLNNPERVLGLAGVWGAVLITSS) the chain is on the lumenal side. Residues 576-596 (GAITFLALLSHILSLAFIQFI) traverse the membrane as a helical segment. At 597–971 (ERPHMQKLYG…GASTPTERKE (375 aa)) the chain is on the cytoplasmic side. The interval 699 to 723 (VEGTDSSSLAEHDQSTGREGANARM) is disordered.

Belongs to the class VI-like SAM-binding methyltransferase superfamily. CHO2 family.

The protein localises to the endoplasmic reticulum membrane. The enzyme catalyses a 1,2-diacyl-sn-glycero-3-phosphoethanolamine + S-adenosyl-L-methionine = a 1,2-diacyl-sn-glycero-3-phospho-N-methylethanolamine + S-adenosyl-L-homocysteine + H(+). It participates in phospholipid metabolism; phosphatidylcholine biosynthesis. Catalyzes the first step of the methylation pathway of phosphatidylcholine biosynthesis, the SAM-dependent methylation of phosphatidylethanolamine (PE) to phosphatidylmonomethylethanolamine (PMME). The chain is Phosphatidylethanolamine N-methyltransferase (cho2) from Aspergillus flavus (strain ATCC 200026 / FGSC A1120 / IAM 13836 / NRRL 3357 / JCM 12722 / SRRC 167).